The following is a 1072-amino-acid chain: RIMS-binding protein 2 (1072 aa).

The region spanning G181–D248 is the SH3 1 domain. 3 consecutive Fibronectin type-III domains span residues V311–V404, A407–A489, and P503–A604. Disordered stretches follow at residues P597–S681 and S713–N800. Pro residues predominate over residues L599–P615. Residues M620–E635 are compositionally biased toward basic and acidic residues. The span at G660–R670 shows a compositional bias: low complexity. 2 positions are modified to phosphoserine: S720 and S728. 2 stretches are compositionally biased toward basic and acidic residues: residues E730–K743 and C754–R765. Over residues D771–Y781 the composition is skewed to acidic residues. Phosphoserine occurs at positions 852 and 859. A Phosphothreonine modification is found at T861. 2 consecutive SH3 domains span residues L868–A936 and V972–D1039. A disordered region spans residues H1044–P1072. Positions S1060–P1072 are enriched in basic residues.

Belongs to the RIMBP family. As to quaternary structure, interacts with RIMS1, RIMS2, CACNA1D and CACNA1B, and potentially with other Ca(2+) channel alpha-1 isoforms.

The protein localises to the cell membrane. It localises to the synapse. Its function is as follows. Plays a role in the synaptic transmission as bifunctional linker that interacts simultaneously with RIMS1, RIMS2, CACNA1D and CACNA1B. The sequence is that of RIMS-binding protein 2 (Rimbp2) from Mus musculus (Mouse).